A 565-amino-acid chain; its full sequence is Mediator of RNA polymerase II transcription subunit 1 (565 aa).

Residues 141-170 are disordered; it reads SGNNLGSGNGTNGSSLTNKTDKKSVSSGNG.

Belongs to the Mediator complex subunit 1 family. As to quaternary structure, component of the Mediator complex.

The protein localises to the nucleus. Component of the Mediator complex, a coactivator involved in the regulated transcription of nearly all RNA polymerase II-dependent genes. Mediator functions as a bridge to convey information from gene-specific regulatory proteins to the basal RNA polymerase II transcription machinery. Mediator is recruited to promoters by direct interactions with regulatory proteins and serves as a scaffold for the assembly of a functional preinitiation complex with RNA polymerase II and the general transcription factors. This Candida glabrata (strain ATCC 2001 / BCRC 20586 / JCM 3761 / NBRC 0622 / NRRL Y-65 / CBS 138) (Yeast) protein is Mediator of RNA polymerase II transcription subunit 1 (MED1).